The following is a 456-amino-acid chain: Kynurenine 3-monooxygenase (456 aa).

Belongs to the aromatic-ring hydroxylase family. KMO subfamily. FAD is required as a cofactor.

It is found in the mitochondrion outer membrane. The enzyme catalyses L-kynurenine + NADPH + O2 + H(+) = 3-hydroxy-L-kynurenine + NADP(+) + H2O. It participates in cofactor biosynthesis; NAD(+) biosynthesis; quinolinate from L-kynurenine: step 1/3. Functionally, catalyzes the hydroxylation of L-kynurenine (L-Kyn) to form 3-hydroxy-L-kynurenine (L-3OHKyn). Required for synthesis of quinolinic acid. The polypeptide is Kynurenine 3-monooxygenase (Candida albicans (strain SC5314 / ATCC MYA-2876) (Yeast)).